A 538-amino-acid polypeptide reads, in one-letter code: Low affinity inorganic phosphate transporter 3 (538 aa).

The Cytoplasmic segment spans residues 1-24 (MAKDQLQVLNALDVAKTQLYHFTA). The chain crosses the membrane as a helical span at residues 25 to 45 (IVIAGMGFFTDAYDLFCISLV). At 46–70 (TKLLGRIYYFHEGAPKPGILPSGIS) the chain is on the extracellular side. The chain crosses the membrane as a helical span at residues 71-91 (AAVNGVAFIGTLSGQLFFGWL). The Cytoplasmic segment spans residues 92 to 99 (GDKLGRKK). Residues 100 to 120 (VYGMTLMLMVICSIACGLSFG) form a helical membrane-spanning segment. Residues 121–122 (KT) are Extracellular-facing. A helical transmembrane segment spans residues 123-143 (ANGVIATLCFFRFWLGFGIGG). The Cytoplasmic portion of the chain corresponds to 144-164 (DYPLSATIMSEYANKKTRGAF). Residues 165-185 (IAAVFAMQGFGILAGGIVALI) traverse the membrane as a helical segment. Over 186 to 211 (VSAGFKNAYPAPTYSAHGKDSTPPEA) the chain is Extracellular. A helical transmembrane segment spans residues 212–232 (DYVWRIIVMIGALPALLTYYW). Residues 233–292 (RMKMPETARYTALVAKNTVKAAADMSKVLNVEIEEDKATVEKIEENGNSFGLFSKEFLRR) are Cytoplasmic-facing. Residues 293-313 (HGLHLLGTTSTWFLLDIAFYS) form a helical membrane-spanning segment. Residues 314-345 (QNLFQKDIFSKIGWIPPPETMNALDEVFRIAR) lie on the Extracellular side of the membrane. A helical transmembrane segment spans residues 346–366 (AQTLIALCSTVPGYWFTVAFI). Residues 367 to 371 (DKMGR) lie on the Cytoplasmic side of the membrane. A helical membrane pass occupies residues 372 to 392 (FAIQLMGSFFMTVFMFALAIP). The Extracellular portion of the chain corresponds to 393-402 (YDHWTKKENR). The helical transmembrane segment at 403–423 (IGFVIMYSLTFFFANFGPNAT) threads the bilayer. Over 424–442 (TFVVPAEIFPARLRSTCHG) the chain is Cytoplasmic. A helical membrane pass occupies residues 443-463 (ISAAAGKAGAIVGAFGFLYAA). Topologically, residues 464–483 (QSTDPKKVDAGYPTGIGVKN) are extracellular. A helical transmembrane segment spans residues 484–504 (ALIVLGCVNFLGMLSTLLVPE). Topologically, residues 505–538 (SKGKSLEEMSKENEGEEENYGTETKGENAQTVPV) are cytoplasmic. Basic and acidic residues predominate over residues 506-517 (KGKSLEEMSKEN). The disordered stretch occupies residues 506 to 538 (KGKSLEEMSKENEGEEENYGTETKGENAQTVPV).

Belongs to the major facilitator superfamily. Phosphate:H(+) symporter (TC 2.A.1.9) family. Expressed at low levels in non-mycorrhized roots.

The protein localises to the cell membrane. It catalyses the reaction phosphate(in) + H(+)(in) = phosphate(out) + H(+)(out). Functionally, low-affinity transporter for external inorganic phosphate (Pi) probably involved in the acquisition of phosphate released by arbuscular mycorrhizal (AM) fungi during AM symbiosis. This chain is Low affinity inorganic phosphate transporter 3, found in Petunia hybrida (Petunia).